Reading from the N-terminus, the 180-residue chain is Outer membrane protein YfaZ (180 aa).

An N-terminal signal peptide occupies residues 1–21; the sequence is MKKIALAGLAGMLLVSASVNA.

The protein resides in the cell outer membrane. The chain is Outer membrane protein YfaZ (yfaZ) from Escherichia coli (strain K12).